Here is a 28-residue protein sequence, read N- to C-terminus: Peptide 2 (28 aa).

Belongs to the short scorpion toxin superfamily. Potassium channel inhibitor family. Alpha-KTx 09 subfamily. As to expression, expressed by the venom gland.

The protein resides in the secreted. In terms of biological role, blocks potassium channels. The sequence is that of Peptide 2 from Hottentotta tamulus sindicus (Scorpion).